Consider the following 163-residue polypeptide: SsrA-binding protein (163 aa).

The span at 140–157 shows a compositional bias: basic and acidic residues; sequence RRGAIAERESKREMDRAL. Residues 140 to 163 are disordered; that stretch reads RRGAIAERESKREMDRALARGRRR.

It belongs to the SmpB family.

Its subcellular location is the cytoplasm. Required for rescue of stalled ribosomes mediated by trans-translation. Binds to transfer-messenger RNA (tmRNA), required for stable association of tmRNA with ribosomes. tmRNA and SmpB together mimic tRNA shape, replacing the anticodon stem-loop with SmpB. tmRNA is encoded by the ssrA gene; the 2 termini fold to resemble tRNA(Ala) and it encodes a 'tag peptide', a short internal open reading frame. During trans-translation Ala-aminoacylated tmRNA acts like a tRNA, entering the A-site of stalled ribosomes, displacing the stalled mRNA. The ribosome then switches to translate the ORF on the tmRNA; the nascent peptide is terminated with the 'tag peptide' encoded by the tmRNA and targeted for degradation. The ribosome is freed to recommence translation, which seems to be the essential function of trans-translation. In Anaeromyxobacter dehalogenans (strain 2CP-C), this protein is SsrA-binding protein.